We begin with the raw amino-acid sequence, 668 residues long: Pentatricopeptide repeat-containing protein CRP1, chloroplastic (668 aa).

A chloroplast-targeting transit peptide spans 1 to 64; that stretch reads MPASLLPPTF…SASLTSPSPP (64 aa). 14 PPR repeats span residues 154–188, 189–226, 227–261, 262–297, 298–332, 333–367, 368–402, 403–437, 438–472, 473–507, 508–542, 543–577, 578–612, and 613–647; these read SPLLLNSLLAASAAASRPAVALRLLSLLREHDFLP, DLASYSHLLASLLNTRDPPDAALLERLLGDLRESRLEP, DAPLFSDLISAFARAALPDAALELLASAQAIGLTP, RSNAVTALISALGTAGRVAEAEALFLEFFLAGEIKP, RTRAYNALLKGYVRIASLKNAEQVLDEMSQCGVAP, DEATYSLLVDAYTRAGRWESARILLKEMEADGVKP, SSYVFSRILAGFRDRGDWQKAFAVLREMQASGVRP, DRHFYNVMIDTFGKYNCLGHAMDAFNKMREEGIEP, DVVTWNTLIDAHCKGGRHDRAAELFEEMRESNCPP, GTTTYNIMINLLGEQEHWEGVEAMLSEMKEQGLVP, NIITYTTLVDVYGRSGRYKEAIDCIEAMKADGLKP, SPTMYHALVNAYAQRGLADHALNVVKAMKADGLEV, SILVLNSLINAFGEDRRVVEAFSVLQFMRENGLRP, and DVITYTTLMKALIRVEQFDKVPVIYEEMITSGCAP.

It belongs to the PPR family. P subfamily. In terms of assembly, component of a multisubunit complex.

It localises to the plastid. The protein localises to the chloroplast stroma. Its function is as follows. Required for the translation of the chloroplast petA and petD mRNAs. Required for the processing of the petD mRNA from a polycistronic precursor. Binds with high affinity to the 5'-UTR of the chloroplastic petA transcript. Activates psaC and petA translation by binding their 5'-UTRs. This Zea mays (Maize) protein is Pentatricopeptide repeat-containing protein CRP1, chloroplastic.